The following is a 1750-amino-acid chain: MASTEVDSRLGRVVIPALDKVIKNASWRKHSKLAHECKSVIERLRSPENSSPVADSESGSSIPGPLHDGGAAEYSLAESEIILSPLINASSTGVLKIVDPAVDCIQKLIAHGYVRGEADPTGGPEALLLSKLIETICKCHELDDEGLELLVLKTLLTAVTSISLRIHGDSLLQIVRTCYGIYLGSRNVVNQATAKASLVQMSVIVFRRMEADSSTVPIQPIVVAELMEPMDKSESDPSTTQSVQGFITKIMQDIDGVFNSANAKGTFGGHDGAFETSLPGTANPTDLLDSTDKDMLDAKYWEISMYKSALEGRKGELADGEVEKDDDSEVQIGNKLRRDAFLVFRALCKLSMKTPPKEDPELMRGKIVALELLKILLENAGAVFRTSDRFLGAIKQYLCLSLLKNSASNLMIIFQLSCSILLSLVSRFRAGLKAEIGVFFPMIVLRVLENVAQPDFQQKMIVLRFLDKLCVDSQILVDIFINYDCDVNSSNIFERMVNGLLKTAQGVPPGTVTTLLPPQEAAMKLEAMKCLVAVLRSMGDWVNKQLRLPDPYSAKMLEIVDRNLEEGSHPVENGKGDGGHGGFERSDSQSELSSGNSDALAIEQRRAYKLELQEGISIFNQKPKKGIEFLIKANKVGDSPEEIAAFLKDASGLNKTLIGDYLGEREDLSLKVMHAYVDSFEFQGMEFDEAIRAFLRGFRLPGEAQKIDRIMEKFAERFCKCNPKDFSSADTAYVLAYSVILLNTDAHNPMVKSKMTADGFIRNNRGIDDGKDLPEEYLRALYERISRNEIKMKDDGLGPQQKQPTNSSRLLGLDTILNIVVPRRGDDMNMETSDDLIRHMQERFKEKARKSESVYYAASDVIILRFMVEVCWAPMLAAFSVPLDQSDDAVITTLCLEGFHHAIHVTSVMSLKTHRDAFVTSLAKFTSLHSPADIKQKNIEAIKAIVKLAEEEGNYLQDAWEHILTCVSRFEHLHLLGEGAPPDATFFAFPQTESGNSPLAKPNSVPAIKERAPGKLQYAASAMIRGSYDGSGVAGKASNTVTSEQMNNLISNLNLLEQVGDMSRIFTRSQRLNSEAIIDFVKALCKVSMDELRSPSDPRVFSLTKIVEIAHYNMNRIRLVWSSIWHVLSDFFVTIGCSDNLSIAIFAMDSLRQLSMKFLEREELANYNFQNEFMKPFVVVMRKSGAVEIRELIIRCVSQMVLSRVDNVKSGWKSMFMIFTTAAHDAHKNIVFLSFEMVEKIIRDYFPHITETETTTFTDCVNCLVAFTNCKFEKDISLQAIAFLQYCARKLAEGYVGSSLRRNPPLSPQGGKIGKQDSGKFLESDEHLYSWFPLLAGLSELSFDPRAEIRKVALKVLFDTLRNHGDHFSLALWERVFESVLFRIFDYVRQDVDPSEDDSTDQRGYNGEVDQESWLYETCSLALQLVVDLFVNFYKTVNPLLKKVLMLFVSLIKRPHQSLAGAGIAALVRLMRDVGHQFSNEQWLEVVSCIKEAADATSPDFSYVTSEDLMEDVSNEDETNDNSNDALRRRNRQLHAVVTDAKSKASIQIFVIQAVTDIYDMYRMSLTANHMLMLFDAMHGIGSNAHKINADLLLRSKLQELGSSLESQEAPLLRLENESFQTCMTFLDNLISDQPVGYNEAEIESHLISLCREVLEFYINISCSKEQSSRWAVPSGSGKKKELTARAPLVVAAIQTLGNMGESLFKKNLPELFPLIATLISCEHGSGEVQVALSDMLQTSMGPVLLRSCC.

At A2 the chain carries N-acetylalanine. Disordered regions lie at residues 44 to 65 (LRSP…IPGP) and 565 to 596 (EEGS…SSGN). Over residues 47-61 (PENSSPVADSESGSS) the composition is skewed to polar residues. The segment covering 565-588 (EEGSHPVENGKGDGGHGGFERSDS) has biased composition (basic and acidic residues). The residue at position 586 (S586) is a Phosphoserine. In terms of domain architecture, SEC7 spans 601-788 (AIEQRRAYKL…RALYERISRN (188 aa)). Residue E703 is part of the active site. S1307 carries the phosphoserine modification.

Homodimer.

The protein resides in the cytoplasm. It localises to the cytosol. Its subcellular location is the membrane. With respect to regulation, inhibited by brefeldin A. Activates the ARF proteins by exchanging bound GDP for free GTP. Plays a role in vesicular protein sorting. Involved both in the nuclear division phase and in the nuclear fusion phase. The chain is Brefeldin A-inhibited guanine nucleotide-exchange protein 3 (BIG3) from Arabidopsis thaliana (Mouse-ear cress).